We begin with the raw amino-acid sequence, 95 residues long: Mitochondrial import inner membrane translocase subunit Tim13 (95 aa).

Met-1 bears the N-acetylmethionine mark. At Ser-7 the chain carries Phosphoserine. Positions 46 to 69 (CFRKCIGKPGGSLDNSEQKCIAMC) match the Twin CX3C motif motif. 2 disulfides stabilise this stretch: Cys-46-Cys-69 and Cys-50-Cys-65. An N6-succinyllysine modification is found at Lys-53.

Belongs to the small Tim family. In terms of assembly, heterohexamer; composed of 3 copies of TIMM8 (TIMM8A or TIMM8B) and 3 copies of TIMM13, named soluble 70 kDa complex. Associates with the TIM22 complex, whose core is composed of TIMM22. As to expression, present at high level in liver and brain, and at lower level in muscle and heart. In CNS sections, it is predominantly present in the soma and the dendritic portion of the Purkinje cells of the cerebellum, but not in the glial cells. Scattered expression also is also detected in the brain stem, olfactory bulb, substantia nigra, hippocampus and striatum (at protein level).

It is found in the mitochondrion inner membrane. Mitochondrial intermembrane chaperone that participates in the import and insertion of some multi-pass transmembrane proteins into the mitochondrial inner membrane. Also required for the transfer of beta-barrel precursors from the TOM complex to the sorting and assembly machinery (SAM complex) of the outer membrane. Acts as a chaperone-like protein that protects the hydrophobic precursors from aggregation and guide them through the mitochondrial intermembrane space. The TIMM8-TIMM13 complex mediates the import of proteins such as TIMM23, SLC25A12/ARALAR1 and SLC25A13/ARALAR2, while the predominant TIMM9-TIMM10 70 kDa complex mediates the import of much more proteins. The protein is Mitochondrial import inner membrane translocase subunit Tim13 (Timm13) of Mus musculus (Mouse).